Consider the following 72-residue polypeptide: Translation initiation factor IF-1 (72 aa).

Residues 1-72 (MPKEEVLEFP…TKGRITYRFK (72 aa)) form the S1-like domain.

Belongs to the IF-1 family. Component of the 30S ribosomal translation pre-initiation complex which assembles on the 30S ribosome in the order IF-2 and IF-3, IF-1 and N-formylmethionyl-tRNA(fMet); mRNA recruitment can occur at any time during PIC assembly.

It localises to the cytoplasm. One of the essential components for the initiation of protein synthesis. Stabilizes the binding of IF-2 and IF-3 on the 30S subunit to which N-formylmethionyl-tRNA(fMet) subsequently binds. Helps modulate mRNA selection, yielding the 30S pre-initiation complex (PIC). Upon addition of the 50S ribosomal subunit IF-1, IF-2 and IF-3 are released leaving the mature 70S translation initiation complex. This Chelativorans sp. (strain BNC1) protein is Translation initiation factor IF-1.